A 417-amino-acid polypeptide reads, in one-letter code: MATSLGSNTYNRQNWEDADFPILCQTCLGENPYIRMTKEKYGKECKICARPFTVFRWCPGVRMRFKKTEVCQTCSKLKNVCQTCLLDLEYGLPIQVRDTGVSLKDEMPRSDVNKEYYTQNMEREIANSDGTRPVGALGKATSSSDMLLKLARTTPYYKRNRPHICSFWVKGECKRGEECPYRHEKPTDPDDPLADQNIKDRFYGINDPVADKLLKRASTMPRLDPPEDKSITTLYVGGLGDTISESELRNHFYQFGEIRTITVVQRQQCAFIQFATRQSAETAAEKSFNKLIVNGRRLNVKWGRSQAARGKEREHDGSGDPGMKFEPVPGLPGALPPPPTEEESSANYFNLPPNGSAALVNISLPPPPGLSGPPPGFGPHMFPPMAPPPFLRAPGHIHYPSQDPQRMGAHAGKPSSG.

The C3H1-type zinc finger occupies 159–186 (RNRPHICSFWVKGECKRGEECPYRHEKP). One can recognise an RRM domain in the interval 232 to 305 (TTLYVGGLGD…RRLNVKWGRS (74 aa)). Disordered stretches follow at residues 303–348 (GRSQ…SANY) and 369–417 (GLSG…PSSG). Residues 309-318 (RGKEREHDGS) are compositionally biased toward basic and acidic residues. Residues 369-391 (GLSGPPPGFGPHMFPPMAPPPFL) are compositionally biased toward pro residues.

The protein belongs to the SLT11 family. In terms of assembly, component of the pre-catalytic and catalytic spliceosome complexes. Component of the postcatalytic spliceosome P complex.

It is found in the nucleus. The protein localises to the cytoplasm. Functionally, required for pre-mRNA splicing as component of the activated spliceosome. Involved in the first step of pre-mRNA splicing. Binds directly to the internal stem-loop (ISL) domain of the U6 snRNA and to the pre-mRNA intron near the 5' splice site during the activation and catalytic phases of the spliceosome cycle. The chain is Pre-mRNA-splicing factor RBM22 (rbm22) from Xenopus laevis (African clawed frog).